The primary structure comprises 426 residues: 3-phosphoshikimate 1-carboxyvinyltransferase (426 aa).

Residues K21, S22, and R26 each coordinate 3-phosphoshikimate. K21 serves as a coordination point for phosphoenolpyruvate. Phosphoenolpyruvate-binding residues include G93 and R121. S165, Q167, D313, and K340 together coordinate 3-phosphoshikimate. Q167 lines the phosphoenolpyruvate pocket. Residue D313 is the Proton acceptor of the active site. Phosphoenolpyruvate contacts are provided by R344 and R386.

It belongs to the EPSP synthase family. In terms of assembly, monomer.

It localises to the cytoplasm. The enzyme catalyses 3-phosphoshikimate + phosphoenolpyruvate = 5-O-(1-carboxyvinyl)-3-phosphoshikimate + phosphate. It functions in the pathway metabolic intermediate biosynthesis; chorismate biosynthesis; chorismate from D-erythrose 4-phosphate and phosphoenolpyruvate: step 6/7. Functionally, catalyzes the transfer of the enolpyruvyl moiety of phosphoenolpyruvate (PEP) to the 5-hydroxyl of shikimate-3-phosphate (S3P) to produce enolpyruvyl shikimate-3-phosphate and inorganic phosphate. The sequence is that of 3-phosphoshikimate 1-carboxyvinyltransferase from Solibacter usitatus (strain Ellin6076).